Reading from the N-terminus, the 356-residue chain is Holliday junction branch migration complex subunit RuvB (356 aa).

The tract at residues 4–192 (DDTTDATADE…FGFTAHMEFY (189 aa)) is large ATPase domain (RuvB-L). Residues Leu-31, Arg-32, Gly-73, Lys-76, Thr-77, Thr-78, 139 to 141 (EDF), Arg-182, Tyr-192, and Arg-229 contribute to the ATP site. Thr-77 contributes to the Mg(2+) binding site. The segment at 193 to 263 (EPHELERVIH…IAAAALKVYE (71 aa)) is small ATPAse domain (RuvB-S). Residues 266–356 (ARGLDRLDRG…GNGQGDLFGA (91 aa)) form a head domain (RuvB-H) region. 3 residues coordinate DNA: Arg-302, Arg-321, and Arg-326.

The protein belongs to the RuvB family. As to quaternary structure, homohexamer. Forms an RuvA(8)-RuvB(12)-Holliday junction (HJ) complex. HJ DNA is sandwiched between 2 RuvA tetramers; dsDNA enters through RuvA and exits via RuvB. An RuvB hexamer assembles on each DNA strand where it exits the tetramer. Each RuvB hexamer is contacted by two RuvA subunits (via domain III) on 2 adjacent RuvB subunits; this complex drives branch migration. In the full resolvosome a probable DNA-RuvA(4)-RuvB(12)-RuvC(2) complex forms which resolves the HJ.

It localises to the cytoplasm. The enzyme catalyses ATP + H2O = ADP + phosphate + H(+). In terms of biological role, the RuvA-RuvB-RuvC complex processes Holliday junction (HJ) DNA during genetic recombination and DNA repair, while the RuvA-RuvB complex plays an important role in the rescue of blocked DNA replication forks via replication fork reversal (RFR). RuvA specifically binds to HJ cruciform DNA, conferring on it an open structure. The RuvB hexamer acts as an ATP-dependent pump, pulling dsDNA into and through the RuvAB complex. RuvB forms 2 homohexamers on either side of HJ DNA bound by 1 or 2 RuvA tetramers; 4 subunits per hexamer contact DNA at a time. Coordinated motions by a converter formed by DNA-disengaged RuvB subunits stimulates ATP hydrolysis and nucleotide exchange. Immobilization of the converter enables RuvB to convert the ATP-contained energy into a lever motion, pulling 2 nucleotides of DNA out of the RuvA tetramer per ATP hydrolyzed, thus driving DNA branch migration. The RuvB motors rotate together with the DNA substrate, which together with the progressing nucleotide cycle form the mechanistic basis for DNA recombination by continuous HJ branch migration. Branch migration allows RuvC to scan DNA until it finds its consensus sequence, where it cleaves and resolves cruciform DNA. The sequence is that of Holliday junction branch migration complex subunit RuvB from Streptomyces avermitilis (strain ATCC 31267 / DSM 46492 / JCM 5070 / NBRC 14893 / NCIMB 12804 / NRRL 8165 / MA-4680).